Consider the following 1035-residue polypeptide: Cell-division control histidine kinase PdhS (1035 aa).

Residues 1–613 (MSGSYPFIDI…HADGSEEPVD (613 aa)) are important for polar localization. The segment at 500–533 (QGLANTRAESETPVSETSSIEPVEPTPPVKTRSE) is disordered. Positions 614-1035 (THLNAIAWRG…VFPPTRVLAD (422 aa)) are interaction with DivK. In terms of domain architecture, PAS spans 659–730 (HVEELKTILD…YLHGLSGNGV (72 aa)). One can recognise a Histidine kinase domain in the interval 802-1031 (RISHEIRTPL…VVEIVFPPTR (230 aa)). Phosphohistidine; by autocatalysis is present on histidine 805.

As to quaternary structure, interacts with DivK.

The protein localises to the cytoplasm. It catalyses the reaction ATP + protein L-histidine = ADP + protein N-phospho-L-histidine.. Functionally, functions as a polar differentiation marker. Essential protein that, by localizing in the old pole of dividing cells, controls cell division and maturation, probably through control of DivK phosphorylation status and cellular distribution, which in turn regulates CtrA, a transcriptional regulator of the minB operon. The asymmetrical localization of this protein is probably required for cells to enter a new division cycle. In Brucella suis (strain ATCC 23445 / NCTC 10510), this protein is Cell-division control histidine kinase PdhS (pdhS).